The following is a 513-amino-acid chain: ATP synthase subunit alpha (513 aa).

169-176 (GDRQIGKT) lines the ATP pocket.

The protein belongs to the ATPase alpha/beta chains family. F-type ATPases have 2 components, CF(1) - the catalytic core - and CF(0) - the membrane proton channel. CF(1) has five subunits: alpha(3), beta(3), gamma(1), delta(1), epsilon(1). CF(0) has three main subunits: a(1), b(2) and c(9-12). The alpha and beta chains form an alternating ring which encloses part of the gamma chain. CF(1) is attached to CF(0) by a central stalk formed by the gamma and epsilon chains, while a peripheral stalk is formed by the delta and b chains.

Its subcellular location is the cell inner membrane. It carries out the reaction ATP + H2O + 4 H(+)(in) = ADP + phosphate + 5 H(+)(out). Its function is as follows. Produces ATP from ADP in the presence of a proton gradient across the membrane. The alpha chain is a regulatory subunit. The chain is ATP synthase subunit alpha from Francisella tularensis subsp. tularensis (strain WY96-3418).